The primary structure comprises 385 residues: F-box only protein 4 (385 aa).

Phosphoserine occurs at positions 11 and 46. Residues 54-100 (TSALTRLPVDVQLYILSFLSPHDLCQLGSTDHYWNKTIRDPILWRYF) form the F-box domain.

Homodimer. Part of the SCF (SKP1-CUL1-F-box) E3 ubiquitin-protein ligase complex SCF(FBXO4) formed of CUL1, SKP1, RBX1 and FBXO4. Interacts with TERF1; this interaction is prevented in the presence of GNL3L. Identified in a complex with CRYAB and CCND1. Phosphorylation at Ser-11 varies during the cell cycle. It is low in resting cells and high in the S phase and the G2/M phase of the cell cycle. Phosphorylation is decreased during late G1 phase. Phosphorylation at Ser-11 is important for homodimerization and for optimal ubiquitin ligase activity towards CCND1.

The protein resides in the cytoplasm. Its pathway is protein modification; protein ubiquitination. In terms of biological role, substrate recognition component of a SCF (SKP1-CUL1-F-box protein) E3 ubiquitin-protein ligase complex that mediates the ubiquitination and subsequent proteasomal degradation of target proteins. Promotes ubiquitination of cyclin-D1 (CCND1) and its subsequent proteasomal degradation. However, it does not act as a major regulator of CCND1 stability during the G1/S transition. Recognizes TERF1 and promotes its ubiquitination together with UBE2D1. Promotes ubiquitination of FXR1 following phosphorylation of FXR1 by GSK3B, leading to FXR1 degradation by the proteasome. This is F-box only protein 4 from Mus musculus (Mouse).